A 415-amino-acid chain; its full sequence is Histidine--tRNA ligase (415 aa).

It belongs to the class-II aminoacyl-tRNA synthetase family. As to quaternary structure, homodimer.

Its subcellular location is the cytoplasm. It carries out the reaction tRNA(His) + L-histidine + ATP = L-histidyl-tRNA(His) + AMP + diphosphate + H(+). The polypeptide is Histidine--tRNA ligase (Clostridium botulinum (strain 657 / Type Ba4)).